We begin with the raw amino-acid sequence, 152 residues long: Ribosome maturation factor RimP (152 aa).

The protein belongs to the RimP family.

Its subcellular location is the cytoplasm. Functionally, required for maturation of 30S ribosomal subunits. The polypeptide is Ribosome maturation factor RimP (Burkholderia vietnamiensis (strain G4 / LMG 22486) (Burkholderia cepacia (strain R1808))).